Reading from the N-terminus, the 4043-residue chain is Polyketide synthase-nonribosomal peptide synthetase (4043 aa).

One can recognise a Ketosynthase family 3 (KS3) domain in the interval 8-446 (SEPIAIIGTG…GANSHAILES (439 aa)). Active-site for beta-ketoacyl synthase activity residues include C181, H320, and H366. An acyl transferase region spans residues 557–877 (VFTGQGAQWA…SRGNSDVEAF (321 aa)). Positions 944 to 1078 (NELLGRQVLD…CRLRITVGDS (135 aa)) are N-terminal hotdog fold. Residues 944-1246 (NELLGRQVLD…TQPLSSPTEA (303 aa)) enclose the PKS/mFAS DH domain. The segment at 945–1243 (ELLGRQVLDG…GLQTQPLSSP (299 aa)) is dehydratase (DH) domain. H976 (proton acceptor; for dehydratase activity) is an active-site residue. Residues 1093–1246 (LLEVESDRFY…TQPLSSPTEA (154 aa)) form a C-terminal hotdog fold region. Residue D1154 is the Proton donor; for dehydratase activity of the active site. Positions 1400-1585 (RYTKYLAAMA…GIETAIPHHD (186 aa)) are methyltransferase (MT) domain. The interval 2115 to 2288 (TYWLVGLTGG…NASAVHIGAI (174 aa)) is ketoreductase (KR)domain. The 82-residue stretch at 2394–2475 (SSSADIYDII…EMVTQAQELL (82 aa)) folds into the Carrier 1 domain. The tract at residues 2395 to 2472 (SSADIYDIIS…TVGEMVTQAQ (78 aa)) is peptidyl carrier protein. At S2435 the chain carries O-(pantetheine 4'-phosphoryl)serine. 2 disordered regions span residues 2476–2575 (PKEL…DPSR) and 2587–2630 (EKHL…SQII). 2 stretches are compositionally biased toward polar residues: residues 2494-2512 (PKNT…QLQN) and 2520-2534 (ALSQ…NMIK). Positions 2537–2550 (PPKEAEAKQPRPEV) are enriched in basic and acidic residues. The span at 2617 to 2627 (TSSSSSSTSAS) shows a compositional bias: low complexity. The segment at 2640 to 3069 (KSVPMAFGQS…NPALRLNVPP (430 aa)) is condensation. Positions 3102–3502 (EIVERYPTHV…EGNLILGGRI (401 aa)) are adenylation. The 81-residue stretch at 3617-3697 (TDESPSMAKM…GMVSLIDHSE (81 aa)) folds into the Carrier 2 domain. Residues 3622 to 3694 (SMAKMRDVWA…SLTGMVSLID (73 aa)) are thiolation. The residue at position 3657 (S3657) is an O-(pantetheine 4'-phosphoryl)serine. Residues 3735-3954 (LTGATGFLGR…DFVSADRVAM (220 aa)) are reductase-like.

The protein in the C-terminal section; belongs to the NRP synthetase family.

It participates in mycotoxin biosynthesis. Hybrid PKS-NRPS synthetase; part of the gene cluster that mediates the biosynthesis of the mycotoxins cytochalasins E and K. The hybrid PKS-NRPS synthetase ccsA and the enoyl reductase ccsC are responsible for fusion of phenylalanine with an octaketide backbone and subsequent release of the stable tetramic acid precursor. The polyketide synthase module (PKS) of the PKS-NRPS ccsA is responsible for the synthesis of the octaketide backbone. The downstream nonribosomal peptide synthetase (NRPS) amidates the carboxyl end of the octaketide with a phenylalanine. A reductase-like domain (R) at the C-terminus catalyzes the reductive release of the polyketide-amino acid intermediate. Because ccsA lacks a designated enoylreductase (ER) domain, the required activity is provided the enoyl reductase ccsC. Upon formation of the 11-membered carbocycle-fused perhydroisoindolone intermediate, a number of oxidative steps are required to afford the final cytochalasin E and K, including two hydroxylations at C17 and C18, one alcohol oxidation at C17, one epoxidation at C6 and C7 and two Baeyer-Villiger oxidations. The oxidative modification at C17, C18 and the C6-C7 epoxidation are likely to be catalyzed by the two cytochrome P450 oxygenases ccsD and ccsG. CcsD may be responsible for the epoxidation of the C6-C7 double bond. CcsG may be responsible for the successive oxidative modifications at C17 and C18. The double Baeyer-Villiger oxidations of ketocytochalasin to precytochalasin and cytochalasin Z(16) are among the final steps leading to cytochalasin E and K and are catalyzed by ccsB. The first oxygen insertion step follows that of the classic BVMO mechanism, generating the ester precytochalasin. Release of precytochalasin into an aqueous environment can generate the shunt product iso-precytochalasin through spontaneous isomerization. Alternatively, precytochalasin can undergo further oxidation by ccsB to yield the in-line carbonate-containing cytochalasin Z(16). Cytochalasin Z(16) is a precursor to cytochalasin E and cytochalasin K, whereas iso-precytochalasin is a precursor to cytochalasin Z(17) and rosellichalasin. The hydrolyase ccsE may catalyze hydrolysis of epoxide bond in cytochalasin E to afford cytochalasin K. The function of ccsF has not been assigned but it may play a role in post-PKS-NRPS biosynthetic step, resistance or transport of cytochalasins and related PKS-NRPS products. The protein is Polyketide synthase-nonribosomal peptide synthetase of Aspergillus clavatus (strain ATCC 1007 / CBS 513.65 / DSM 816 / NCTC 3887 / NRRL 1 / QM 1276 / 107).